Here is a 499-residue protein sequence, read N- to C-terminus: Probable cytosol aminopeptidase (499 aa).

Mn(2+) contacts are provided by lysine 268 and aspartate 273. The active site involves lysine 280. 3 residues coordinate Mn(2+): aspartate 291, aspartate 350, and glutamate 352. The active site involves arginine 354.

Belongs to the peptidase M17 family. Mn(2+) serves as cofactor.

The protein localises to the cytoplasm. The catalysed reaction is Release of an N-terminal amino acid, Xaa-|-Yaa-, in which Xaa is preferably Leu, but may be other amino acids including Pro although not Arg or Lys, and Yaa may be Pro. Amino acid amides and methyl esters are also readily hydrolyzed, but rates on arylamides are exceedingly low.. It carries out the reaction Release of an N-terminal amino acid, preferentially leucine, but not glutamic or aspartic acids.. In terms of biological role, presumably involved in the processing and regular turnover of intracellular proteins. Catalyzes the removal of unsubstituted N-terminal amino acids from various peptides. This Halorhodospira halophila (strain DSM 244 / SL1) (Ectothiorhodospira halophila (strain DSM 244 / SL1)) protein is Probable cytosol aminopeptidase.